A 191-amino-acid chain; its full sequence is Fe/S biogenesis protein NfuA (191 aa).

[4Fe-4S] cluster-binding residues include C149 and C152.

This sequence belongs to the NfuA family. Homodimer. It depends on [4Fe-4S] cluster as a cofactor.

Involved in iron-sulfur cluster biogenesis. Binds a 4Fe-4S cluster, can transfer this cluster to apoproteins, and thereby intervenes in the maturation of Fe/S proteins. Could also act as a scaffold/chaperone for damaged Fe/S proteins. This Pseudoalteromonas translucida (strain TAC 125) protein is Fe/S biogenesis protein NfuA.